We begin with the raw amino-acid sequence, 569 residues long: Retrotransposon Gag-like protein 5 (569 aa).

Disordered regions lie at residues 115 to 151 (DGPA…LERP) and 323 to 506 (RNII…PSRR). Residues 117 to 146 (PADPPLLPIPPPPALPPPASKEPPPQPPLA) are compositionally biased toward pro residues. Residues 334 to 350 (NEEESEDEEYYSEDEDQ) are compositionally biased toward acidic residues. Residues 353–367 (RRHRLHSKDQRKRMR) show a composition bias toward basic residues. Basic and acidic residues-rich tracts occupy residues 372–392 (EMKE…KKEE) and 401–415 (MKQK…NKNE). Acidic residues-rich tracts occupy residues 416–429 (EEGE…EDED) and 443–469 (GTEE…ELME). Residues 476–485 (HASSQTSGPT) show a composition bias toward polar residues.

This chain is Retrotransposon Gag-like protein 5, found in Homo sapiens (Human).